Consider the following 156-residue polypeptide: Small ribosomal subunit protein uS7c (156 aa).

Belongs to the universal ribosomal protein uS7 family. As to quaternary structure, part of the 30S ribosomal subunit.

It localises to the plastid. The protein localises to the chloroplast. Functionally, one of the primary rRNA binding proteins, it binds directly to 16S rRNA where it nucleates assembly of the head domain of the 30S subunit. This chain is Small ribosomal subunit protein uS7c (rps7), found in Stangeria eriopus (Natal grass cycad).